Consider the following 158-residue polypeptide: Transcription elongation factor GreA (158 aa).

Residues 8–74 are a coiled coil; sequence TKGGYNKLKD…TLERVLSTAT (67 aa).

The protein belongs to the GreA/GreB family.

In terms of biological role, necessary for efficient RNA polymerase transcription elongation past template-encoded arresting sites. The arresting sites in DNA have the property of trapping a certain fraction of elongating RNA polymerases that pass through, resulting in locked ternary complexes. Cleavage of the nascent transcript by cleavage factors such as GreA or GreB allows the resumption of elongation from the new 3'terminus. GreA releases sequences of 2 to 3 nucleotides. The sequence is that of Transcription elongation factor GreA from Chloroherpeton thalassium (strain ATCC 35110 / GB-78).